The following is a 1465-amino-acid chain: DNA polymerase III polC-type (1465 aa).

In terms of domain architecture, Exonuclease spans 427–583; that stretch reads YVVFDVETTG…YDAEATGRLL (157 aa).

The protein belongs to the DNA polymerase type-C family. PolC subfamily.

Its subcellular location is the cytoplasm. It carries out the reaction DNA(n) + a 2'-deoxyribonucleoside 5'-triphosphate = DNA(n+1) + diphosphate. In terms of biological role, required for replicative DNA synthesis. This DNA polymerase also exhibits 3' to 5' exonuclease activity. The sequence is that of DNA polymerase III polC-type from Streptococcus pyogenes serotype M3 (strain ATCC BAA-595 / MGAS315).